The primary structure comprises 98 residues: UPF0235 protein APJL_1398 (98 aa).

This sequence belongs to the UPF0235 family.

The sequence is that of UPF0235 protein APJL_1398 from Actinobacillus pleuropneumoniae serotype 3 (strain JL03).